The primary structure comprises 119 residues: Phytosulfokines 2 (119 aa).

An N-terminal signal peptide occupies residues 1-34 (MSTTRGVSSSSAAAALALLLLFALCFFSFHFAAA). The propeptide occupies 35–109 (ARAVPRDEHQ…RRLLSDAHLD (75 aa)). Sulfotyrosine is present on residues Y110 and Y112. Residues 115-119 (HKNKP) constitute a propeptide that is removed on maturation.

Belongs to the phytosulfokine family. In terms of processing, sulfation is important for activity and for the binding to a putative membrane receptor. Post-translationally, PSK-alpha is produced by endopeptidase digestion. PSK-beta is produced from PSK-alpha by exopeptidase digestion.

The protein localises to the secreted. In terms of biological role, promotes plant cell differentiation, organogenesis and somatic embryogenesis as well as cell proliferation. This chain is Phytosulfokines 2 (PSK2), found in Oryza sativa subsp. japonica (Rice).